A 199-amino-acid polypeptide reads, in one-letter code: NADH-quinone oxidoreductase subunit C (199 aa).

It belongs to the complex I 30 kDa subunit family. NDH-1 is composed of 14 different subunits. Subunits NuoB, C, D, E, F, and G constitute the peripheral sector of the complex.

It is found in the cell membrane. It carries out the reaction a quinone + NADH + 5 H(+)(in) = a quinol + NAD(+) + 4 H(+)(out). Functionally, NDH-1 shuttles electrons from NADH, via FMN and iron-sulfur (Fe-S) centers, to quinones in the respiratory chain. The immediate electron acceptor for the enzyme in this species is believed to be ubiquinone. Couples the redox reaction to proton translocation (for every two electrons transferred, four hydrogen ions are translocated across the cytoplasmic membrane), and thus conserves the redox energy in a proton gradient. The polypeptide is NADH-quinone oxidoreductase subunit C (Polynucleobacter asymbioticus (strain DSM 18221 / CIP 109841 / QLW-P1DMWA-1) (Polynucleobacter necessarius subsp. asymbioticus)).